We begin with the raw amino-acid sequence, 97 residues long: Mapk-regulated corepressor-interacting protein 1 (97 aa).

The disordered stretch occupies residues 1 to 30 (MTSSPVSRVVYNGKRTSSPRSPPSSSEIFT). 2 positions are modified to phosphoserine: Ser-21 and Ser-24. Residue Thr-30 is modified to Phosphothreonine. Tyr-41 is subject to Phosphotyrosine. The residue at position 79 (Lys-79) is an N6-acetyllysine. Residues 80–84 (PIDLS) carry the PXDLS motif motif.

Belongs to the MCRIP family. Interacts (unphosphorylated form, via the PXDLS motif) with CTBP1, competitively inhibiting CTBP-ZEB1 interaction. Interacts with CTBP2. Interacts with MCRIP2. Interacts with DDX6. Phosphorylation by MAPK3/1 (ERK1/2) regulates MCRIP1 binding to CTBP(s).

It is found in the nucleus. Its subcellular location is the cytoplasm. The protein localises to the stress granule. Functionally, the phosphorylation status of MCRIP1 functions as a molecular switch to regulate epithelial-mesenchymal transition. Unphosphorylated MCRIP1 binds to and inhibits the transcriptional corepressor CTBP(s). When phosphorylated by MAPK/ERK, MCRIP1 releases CTBP(s) resulting in transcriptional silencing of the E-cadherin gene and induction of epithelial-mesenchymal transition. This chain is Mapk-regulated corepressor-interacting protein 1, found in Homo sapiens (Human).